The primary structure comprises 366 residues: Eukaryotic translation initiation factor 3 subunit H (366 aa).

In terms of domain architecture, MPN spans 12-161 (VKVEALVVMK…LRAFRLSPKF (150 aa)).

Belongs to the eIF-3 subunit H family. Component of the eukaryotic translation initiation factor 3 (eIF-3) complex.

It localises to the cytoplasm. Functionally, component of the eukaryotic translation initiation factor 3 (eIF-3) complex, which is involved in protein synthesis of a specialized repertoire of mRNAs and, together with other initiation factors, stimulates binding of mRNA and methionyl-tRNAi to the 40S ribosome. The eIF-3 complex specifically targets and initiates translation of a subset of mRNAs involved in cell proliferation. The sequence is that of Eukaryotic translation initiation factor 3 subunit H from Emericella nidulans (strain FGSC A4 / ATCC 38163 / CBS 112.46 / NRRL 194 / M139) (Aspergillus nidulans).